We begin with the raw amino-acid sequence, 470 residues long: tRNA-2-methylthio-N(6)-dimethylallyladenosine synthase (470 aa).

Positions 5–122 (RKLYVKSFGC…LPELLAEAKA (118 aa)) constitute an MTTase N-terminal domain. Cysteine 14, cysteine 50, cysteine 85, cysteine 163, cysteine 167, and cysteine 170 together coordinate [4Fe-4S] cluster. A Radical SAM core domain is found at 149–383 (RSRGPAAFVT…LLEASKAAFD (235 aa)). Positions 384–446 (ESCRGRTFDI…PNSLAGVPAE (63 aa)) constitute a TRAM domain. Residues 439–470 (SLAGVPAEASEPSVSQSPVSSARSRPLAAMEA) form a disordered region. Low complexity predominate over residues 444-464 (PAEASEPSVSQSPVSSARSRP).

This sequence belongs to the methylthiotransferase family. MiaB subfamily. Monomer. [4Fe-4S] cluster serves as cofactor.

Its subcellular location is the cytoplasm. It carries out the reaction N(6)-dimethylallyladenosine(37) in tRNA + (sulfur carrier)-SH + AH2 + 2 S-adenosyl-L-methionine = 2-methylsulfanyl-N(6)-dimethylallyladenosine(37) in tRNA + (sulfur carrier)-H + 5'-deoxyadenosine + L-methionine + A + S-adenosyl-L-homocysteine + 2 H(+). Functionally, catalyzes the methylthiolation of N6-(dimethylallyl)adenosine (i(6)A), leading to the formation of 2-methylthio-N6-(dimethylallyl)adenosine (ms(2)i(6)A) at position 37 in tRNAs that read codons beginning with uridine. In Xanthobacter autotrophicus (strain ATCC BAA-1158 / Py2), this protein is tRNA-2-methylthio-N(6)-dimethylallyladenosine synthase.